We begin with the raw amino-acid sequence, 76 residues long: Putative Fe(2+) transport protein A (76 aa).

It belongs to the FeoA family.

Its function is as follows. Might be involved in Fe(2+) ion uptake. The protein is Putative Fe(2+) transport protein A of Helicobacter pylori (strain ATCC 700392 / 26695) (Campylobacter pylori).